A 354-amino-acid chain; its full sequence is Protein Wnt-11 (354 aa).

A signal peptide spans 1–24 (MRARPQVCEALLFALALHTGVCYG). N-linked (GlcNAc...) asparagine glycans are attached at residues N40 and N90. 3 disulfide bridges follow: C80–C91, C130–C138, and C140–C157. N160 carries an N-linked (GlcNAc...) asparagine glycan. 8 disulfide bridges follow: C209–C223, C211–C218, C283–C314, C299–C309, C313–C353, C329–C344, C331–C341, and C336–C337. S215 carries the O-palmitoleoyl serine; by PORCN lipid modification. N-linked (GlcNAc...) asparagine glycosylation is found at N300 and N304.

This sequence belongs to the Wnt family. Palmitoleoylation is required for efficient binding to frizzled receptors. Depalmitoleoylation leads to Wnt signaling pathway inhibition.

Its subcellular location is the secreted. It localises to the extracellular space. It is found in the extracellular matrix. Its function is as follows. Ligand for members of the frizzled family of seven transmembrane receptors. Probable developmental protein. May be a signaling molecule which affects the development of discrete regions of tissues. Is likely to signal over only few cell diameters. The chain is Protein Wnt-11 (Wnt11) from Mus musculus (Mouse).